The chain runs to 88 residues: Phosphocarrier protein HPr (88 aa).

The 88-residue stretch at 1–88 (MEKREFNIIA…DTMKKEGLAE (88 aa)) folds into the HPr domain. The active-site Pros-phosphohistidine intermediate is the H15. The residue at position 46 (S46) is a Phosphoserine; by HPrK/P.

Belongs to the HPr family.

The protein localises to the cytoplasm. With respect to regulation, phosphorylation on Ser-46 inhibits the phosphoryl transfer from enzyme I to HPr. General (non sugar-specific) component of the phosphoenolpyruvate-dependent sugar phosphotransferase system (sugar PTS). This major carbohydrate active-transport system catalyzes the phosphorylation of incoming sugar substrates concomitantly with their translocation across the cell membrane. The phosphoryl group from phosphoenolpyruvate (PEP) is transferred to the phosphoryl carrier protein HPr by enzyme I. Phospho-HPr then transfers it to the PTS EIIA domain. In terms of biological role, P-Ser-HPr interacts with the catabolite control protein A (CcpA), forming a complex that binds to DNA at the catabolite response elements cre, operator sites preceding a large number of catabolite-regulated genes. Thus, P-Ser-HPr is a corepressor in carbon catabolite repression (CCR), a mechanism that allows bacteria to coordinate and optimize the utilization of available carbon sources. P-Ser-HPr also plays a role in inducer exclusion, in which it probably interacts with several non-PTS permeases and inhibits their transport activity. The polypeptide is Phosphocarrier protein HPr (ptsH) (Lacticaseibacillus casei (Lactobacillus casei)).